The chain runs to 1590 residues: MRLFSLLPLLALLVVQAAGQSEVTSDDPATDAGSTTNSTTDTKPRIPSQDEILGQMPSINPIRTGNPQMDAFYMMFPALGSLLKWGSLFPAYSILGAIPDNLQPTAAASKVVLVLADDATAKTRVARQNPPPNPLGQLMNWPALPQDFQLPSMDLGPQVGSFLAQLPAMPTVPGLLGAAAPVPAPAPAPAAAPPPAPAPAADPPAAPVPDAPQPAILGQAALQNAFTFFNPANFDASSLLGQSVPTFAPPNLDFVAQMQRQFFPGMTPAQPAAAGTDAQASDISEVRVRPEDPYSQEAQMKIKSALEMEQERQQQAQVKDQEQVPLLWFRMPTTQNQDATEEKTLEDLRVEAKLRAFERQVIAELRMLQKIELMAKQMRSSAAAQNGDSPYRISYPLSRTPIHKITRADIEQALRDDYVRRLVNKEAQRRARNSGINTQKANALKRQAKSQDQTLSKEDIVQIMAYAYRMANEQMESEKGKQDKVYAAYRTEQNPMMMQQRQWSEEQAKIQQNQQQIQQNPMMMQQRQWSEEQAKIQQNQQQIQQNPMMMQQRQWSEEQAKIQQNQQQIQQNPMMMQQRQWSEEQAKIQQNQQQIQQNPMMVQQRQWSEEQAKIQQNQQQIQQNPMMMQQRQWSEEQAKIQHDQQMAQQMAQQGLMMTEQRQRQWSEDQAKIQQAQQMAQQTPMMMPQMQQRQWTEDPQMVQQMQQRQWAEDQTRMQMAQQNPMMQQQRQMAENPQMMQQRQWSEEQTKIEQAQQMAQQNQMMMQQMQQRQWSEDQAQIQQQQRQMMQQTPMMMKERQWAEENPQSVQQQGPMMMQQQMPSMMQREVEDEDNKAEDDLVGEAGPQMPENEGTARHKVDALGVGGNKRKKSKSKSAPPTVINYYYAAPQRPVVQSYGTSYGGGGYGSNAYGVPRPVNSYQSQGYRAAVGNDEVDEMLRQHQTMARTINPKQPGEVGGSESQKSNSNPPTTLTPAPQEQPQEHRVHKRLAHFHRFGREAGLNATTSKGCGCGRLDCLCGRSCRCGRRGLESRVVSSRTSGTCQCKASHRNKRSVEYGTLETIDEGSLNELRREYKLGLKEITLSPDEDPAEALMRYNAASIREALERASMEPLEIGGDQYEEDAQQEPMEEEQLQHDPNTEPQYNHKDFVRLTTSTASPITSTTEAATPTGSDSTSEATVTPEVTTTTSTSTTTTTESTKDEGLDMQQDSQAEAESSHVTKSISKQEAEIHQLHSIVEELKNEILKLNLRCSTIISNNVAKEPVTEKNPPVVEEPSKQEDKPKVEEKVIAEEQAPVEQEEELEEDEDSTSISTTTETPSPSGSYSTKPGLSLGSPRVDEQSGSSNKLDYDDDNNWQRILANRGYDTDYLTKSHERQFAQGQNLEMPKNCNYDGNGSQEYGPYPEFQADEPSTDTEGKAKRALSVKQQAQLLNAALNDSGSDSSDGTTTTTTPSPYAMRGKFVRRRSTARRVPIPKIGKASDEVWVRSPRQAKMPQRPKKSMSKPKKQSSQVTTQATVSSTKLDSLVDVLKDLVRLQIQKEKKSSLLRTQSNNLSKTKPKSIKPVKVIKRKRLRRRQHKSIATTIRSPIQTKA.

A signal peptide spans 1 to 19 (MRLFSLLPLLALLVVQAAG). Disordered stretches follow at residues 23 to 60 (VTSDDPATDAGSTTNSTTDTKPRIPSQDEILGQMPSIN), 184 to 212 (APAPAPAAAPPPAPAPAADPPAAPVPDAP), and 268 to 294 (PAQPAAAGTDAQASDISEVRVRPEDPY). Over residues 32 to 41 (AGSTTNSTTD) the composition is skewed to polar residues. Over residues 268 to 280 (PAQPAAAGTDAQA) the composition is skewed to low complexity. 5 tandem repeats follow at residues 493–518 (QNPMMMQQRQWSEEQAKIQQNQQQIQ), 519–544 (QNPMMMQQRQWSEEQAKIQQNQQQIQ), 545–570 (QNPMMMQQRQWSEEQAKIQQNQQQIQ), 571–596 (QNPMMMQQRQWSEEQAKIQQNQQQIQ), and 597–622 (QNPMMVQQRQWSEEQAKIQQNQQQIQ). Positions 493-788 (QNPMMMQQRQ…IQQQQRQMMQ (296 aa)) are 12 X 26 AA approximate tandem repeats, Glu, Met-rich. A 6; approximate repeat occupies 623-652 (QNPMMMQQRQWSEEQAKIQHDQQMAQQMAQ). A 7; approximate repeat occupies 653 to 680 (QGLMMTEQRQRQWSEDQAKIQQAQQMAQ). An 8; approximate repeat occupies 681–696 (QTPMMMPQMQQRQWTE). Residues 697-720 (DPQMVQQMQQRQWAEDQTRMQMAQ) form a 9; approximate repeat. The stretch at 721 to 733 (QNPMMQQQRQMAE) is one 10; approximate repeat. The stretch at 734–758 (NPQMMQQRQWSEEQTKIEQAQQMAQ) is one 11; approximate repeat. The stretch at 759–788 (QNQMMMQQMQQRQWSEDQAQIQQQQRQMMQ) is one 12; approximate repeat. Disordered regions lie at residues 843-875 (GPQMPENEGTARHKVDALGVGGNKRKKSKSKSA), 944-983 (RTINPKQPGEVGGSESQKSNSNPPTTLTPAPQEQPQEHRV), 1119-1221 (EEDA…TKSI), 1261-1352 (PVTE…DDNN), 1375-1515 (FAQG…QATV), and 1538-1590 (EKKS…QTKA). Positions 957–977 (SESQKSNSNPPTTLTPAPQEQ) are enriched in polar residues. The span at 1119-1130 (EEDAQQEPMEEE) shows a compositional bias: acidic residues. The span at 1131–1148 (QLQHDPNTEPQYNHKDFV) shows a compositional bias: basic and acidic residues. Residues 1151–1195 (TTSTASPITSTTEAATPTGSDSTSEATVTPEVTTTTSTSTTTTTE) are compositionally biased toward low complexity. Over residues 1205–1221 (QQDSQAEAESSHVTKSI) the composition is skewed to polar residues. The span at 1272–1288 (EPSKQEDKPKVEEKVIA) shows a compositional bias: basic and acidic residues. Residues 1295–1306 (EQEEELEEDEDS) show a composition bias toward acidic residues. Composition is skewed to low complexity over residues 1307 to 1319 (TSISTTTETPSPS) and 1435 to 1452 (DSGSDSSDGTTTTTTPSP). Over residues 1493-1504 (QRPKKSMSKPKK) the composition is skewed to basic residues. Over residues 1505–1515 (QSSQVTTQATV) the composition is skewed to low complexity. Basic residues predominate over residues 1554 to 1576 (TKPKSIKPVKVIKRKRLRRRQHK). Positions 1577–1590 (SIATTIRSPIQTKA) are enriched in polar residues.

The protein resides in the secreted. Its function is as follows. Required for proper assembly of the eggshell. This Drosophila melanogaster (Fruit fly) protein is Defective chorion protein, FC177 isoform.